The sequence spans 86 residues: uncharacterized protein (86 aa).

This is an uncharacterized protein from Acidianus bottle-shaped virus (isolate Italy/Pozzuoli) (ABV).